The sequence spans 109 residues: Parvalbumin, muscle (109 aa).

Alanine 1 carries the post-translational modification N-acetylalanine. 2 consecutive EF-hand domains span residues 38-73 (KSPE…FTPD) and 77-109 (LSDK…VAES). Residues aspartate 51, aspartate 53, serine 55, glutamate 62, aspartate 90, aspartate 92, aspartate 94, lysine 96, and glutamate 101 each contribute to the Ca(2+) site.

This sequence belongs to the parvalbumin family.

Its function is as follows. In muscle, parvalbumin is thought to be involved in relaxation after contraction. It binds two calcium ions. The chain is Parvalbumin, muscle from Gallus gallus (Chicken).